The primary structure comprises 281 residues: GPN-loop GTPase 3 (281 aa).

Residue 13-18 participates in GTP binding; sequence GSGKST. Residues 70–72 carry the Gly-Pro-Asn (GPN)-loop; involved in dimer interface motif; it reads GPN. Position 173–176 (173–176) interacts with GTP; that stretch reads SKMD. The tract at residues 259 to 281 is disordered; that stretch reads VQYGEDEEPKEPKDMDEGDFTAQ.

The protein belongs to the GPN-loop GTPase family. As to quaternary structure, heterodimers with GPN1 or GPN2. Binds to RNA polymerase II (RNAPII).

Its function is as follows. Small GTPase required for proper nuclear import of RNA polymerase II and III (RNAPII and RNAPIII). May act at an RNAP assembly step prior to nuclear import. This Mycosarcoma maydis (Corn smut fungus) protein is GPN-loop GTPase 3.